The sequence spans 100 residues: Small ribosomal subunit protein uS14c (100 aa).

The protein belongs to the universal ribosomal protein uS14 family. As to quaternary structure, part of the 30S ribosomal subunit.

The protein localises to the plastid. It localises to the chloroplast. Its function is as follows. Binds 16S rRNA, required for the assembly of 30S particles. The polypeptide is Small ribosomal subunit protein uS14c (Nasturtium officinale (Watercress)).